Consider the following 274-residue polypeptide: 2,3,4,5-tetrahydropyridine-2,6-dicarboxylate N-succinyltransferase (274 aa).

The substrate site is built by Arg-106 and Asp-143.

The protein belongs to the transferase hexapeptide repeat family. As to quaternary structure, homotrimer.

It is found in the cytoplasm. It carries out the reaction (S)-2,3,4,5-tetrahydrodipicolinate + succinyl-CoA + H2O = (S)-2-succinylamino-6-oxoheptanedioate + CoA. It functions in the pathway amino-acid biosynthesis; L-lysine biosynthesis via DAP pathway; LL-2,6-diaminopimelate from (S)-tetrahydrodipicolinate (succinylase route): step 1/3. This Rickettsia prowazekii (strain Madrid E) protein is 2,3,4,5-tetrahydropyridine-2,6-dicarboxylate N-succinyltransferase.